Consider the following 445-residue polypeptide: Probable D-serine dehydratase (445 aa).

Lysine 111 is subject to N6-(pyridoxal phosphate)lysine.

Belongs to the serine/threonine dehydratase family. DsdA subfamily. Pyridoxal 5'-phosphate is required as a cofactor.

The enzyme catalyses D-serine = pyruvate + NH4(+). This chain is Probable D-serine dehydratase, found in Burkholderia pseudomallei (strain 1106a).